The primary structure comprises 216 residues: MYTAIVNLKTYREATGANFTRFMEKFEPVQGKFELIFSPSLLDLEKAAKCGKFRFFAQHVDAEPYGAYTGHVPMDMMIDLGITGSILNHSERRLPRDTIINTLKKASKLDFTIVLCVENAEEAKYFREYEPDFIAYEPRDLIGGDVSVSTAKPEIIEDIVKIYEGTGTSVLVGAGIKTGEDVRRSIGLGARGILVASGVVKSADPTKSLNSLIELK.

Substrate is bound at residue Asn-7–Lys-9. The active-site Electrophile is His-89. Glu-137 functions as the Proton acceptor in the catalytic mechanism. Substrate contacts are provided by residues Ile-142, Gly-175, and Ala-196 to Ser-197.

Belongs to the triosephosphate isomerase family. Homotetramer; dimer of dimers.

Its subcellular location is the cytoplasm. The catalysed reaction is D-glyceraldehyde 3-phosphate = dihydroxyacetone phosphate. It functions in the pathway carbohydrate biosynthesis; gluconeogenesis. It participates in carbohydrate degradation; glycolysis; D-glyceraldehyde 3-phosphate from glycerone phosphate: step 1/1. In terms of biological role, involved in the gluconeogenesis. Catalyzes stereospecifically the conversion of dihydroxyacetone phosphate (DHAP) to D-glyceraldehyde-3-phosphate (G3P). This Thermoplasma acidophilum (strain ATCC 25905 / DSM 1728 / JCM 9062 / NBRC 15155 / AMRC-C165) protein is Triosephosphate isomerase.